The following is a 374-amino-acid chain: Translocating chain-associated membrane protein 1 (374 aa).

The Cytoplasmic segment spans residues 1–29; that stretch reads MAIRKKSSKNPPVLSHEFVLQNHADIVSC. The helical transmembrane segment at 30-50 threads the bilayer; sequence VAMVFLLGLMFEITAKVSIIF. At 51-81 the chain is on the lumenal side; it reads VTLQYNVTLPATEEQATESAFLYYYGIKDLA. An N-linked (GlcNAc...) asparagine glycan is attached at asparagine 56. A helical transmembrane segment spans residues 82 to 102; it reads TVFFYMLVAIIIHAIIQEYVL. Over 103–121 the chain is Cytoplasmic; that stretch reads DKINRRMHFSKTKHSKFNE. A TLC domain is found at 117–326; it reads SKFNESGQLS…NFQLRRWREH (210 aa). Residues 122–142 form a helical membrane-spanning segment; it reads SGQLSAFYLFSCIWGTFILIS. Over 143–159 the chain is Lumenal; that stretch reads ENYISDPTILWRAYPHN. A helical transmembrane segment spans residues 160-180; sequence LMTFQMKFFYISQLAYWFHAF. Topologically, residues 181-192 are cytoplasmic; sequence PELYFQKTKKED. A helical transmembrane segment spans residues 193 to 213; sequence IPRQLVYIGLYLFHIAGAYLL. A topological domain (lumenal) is located at residue asparagine 214. A helical transmembrane segment spans residues 215 to 235; it reads LNHLGLVLLVLHYFVEFLFHI. At 236–251 the chain is on the cytoplasmic side; that stretch reads SRLFYFSDEKYQKGFS. Residues 252 to 272 traverse the membrane as a helical segment; sequence LWAVLFVLGRLLTLILSVLTV. The Lumenal portion of the chain corresponds to 273-297; the sequence is GFGLARAENQKLDFSTGNFNVLAVR. A helical membrane pass occupies residues 298-318; it reads IAVLASICITQAFMMWKFINF. The Cytoplasmic segment spans residues 319–374; the sequence is QLRRWREHSAFQAPAVKKKPPVTKGRSSRKGTENGVNGTVTSNGADSPRNRKEKSS. The disordered stretch occupies residues 331-374; that stretch reads APAVKKKPPVTKGRSSRKGTENGVNGTVTSNGADSPRNRKEKSS. The segment covering 334–347 has biased composition (basic residues); it reads VKKKPPVTKGRSSR. Over residues 352–363 the composition is skewed to polar residues; it reads NGVNGTVTSNGA. A Phosphoserine modification is found at serine 365.

The protein belongs to the TRAM family. As to quaternary structure, interacts with SEC61B. May interact with Derlin-1/DERL1. N-glycosylated.

The protein localises to the endoplasmic reticulum membrane. Functionally, involved in the translocation of nascent protein chains into or through the endoplasmic reticulum (ER) membrane by facilitating the proper chain positioning at the SEC61 channel. Regulates the exposure of nascent secretory protein chain to the cytosol during translocation into the ER. May affect the phospholipid bilayer in the vicinity of the lateral gate of the SEC61 channel, thereby facilitating ER protein transport. Intimately associates with transmembrane (TM) domain of nascent membrane proteins during the entire integration process into the ER membrane. Associates with the second TM domain of G-protein-coupled receptor opsin/OPSD nascent chain in the ER membrane, which may facilitate its integration into the membrane. Under conditions of ER stress, participates in the disposal of misfolded ER membrane proteins during the unfolded protein response (UPR), an integrated stress response (ISR) pathway, by selectively retrotranslocating misfolded ER-membrane proteins from the ER into the cytosol where they are ubiquitinated and degraded by the proteasome. This chain is Translocating chain-associated membrane protein 1 (TRAM1), found in Bos taurus (Bovine).